A 168-amino-acid polypeptide reads, in one-letter code: Mitochondrial inner membrane protein Mpv17 (168 aa).

The next 4 helical transmembrane spans lie at 12 to 29 (INVA…QFFF), 41 to 61 (RTLR…RRWY), 82 to 101 (MLVD…SFLV), and 144 to 166 (LGYQ…SMIL).

This sequence belongs to the peroxisomal membrane protein PXMP2/4 family. Part of a larger complex that may be a homohexamer.

The protein resides in the mitochondrion inner membrane. Its function is as follows. Non-selective channel that modulates the membrane potential under normal conditions and oxidative stress, and is involved in mitochondrial homeostasis. Can translocate uridine, but not orotate, across a lipid membrane. Involved in maintenance of mitochondrial ultrastructure. May be involved in mitochondrial DNA (mtDNA) maintenance but does not appear to be directly involved in mitochondrial deoxynucleoside triphosphate (dNTP) pool homeostasis. May be involved in the regulation of reactive oxygen species metabolism and the control of oxidative phosphorylation. In Drosophila melanogaster (Fruit fly), this protein is Mitochondrial inner membrane protein Mpv17.